The sequence spans 269 residues: Subtilisin BL (269 aa).

Q2 contributes to the Ca(2+) binding site. The 264-residue stretch at P5–T268 folds into the Peptidase S8 domain. Catalysis depends on D32, which acts as the Charge relay system. D40 contributes to the Ca(2+) binding site. H62 acts as the Charge relay system in catalysis. Ca(2+) contacts are provided by L73, N75, I77, V79, A163, Y165, and A168. The Charge relay system role is filled by S215.

Belongs to the peptidase S8 family. It depends on Ca(2+) as a cofactor.

Its subcellular location is the secreted. It carries out the reaction Hydrolysis of proteins with broad specificity for peptide bonds, and a preference for a large uncharged residue in P1. Hydrolyzes peptide amides.. Subtilisin is an extracellular alkaline serine protease, it catalyzes the hydrolysis of proteins and peptide amides. The polypeptide is Subtilisin BL (Lederbergia lenta (Bacillus lentus)).